The following is a 1004-amino-acid chain: Cadmium/zinc-transporting ATPase HMA3 (1004 aa).

The HMA domain maps to 42–108 (KKTYLDVLGV…ALNKAGLEAS (67 aa)). A run of 8 helical transmembrane segments spans residues 120–140 (RWPS…FFEW), 144–164 (PLQC…VRRG), 171–191 (LSLD…CLGD), 193–213 (TEAG…TLAC), 340–360 (CAKY…LIPA), 371–391 (WKLA…LSTP), 683–703 (IAVN…LAAA), and 707–727 (VLWA…LNSM). A disordered region spans residues 931-952 (TGCGASKRSPPAEGSCSGGEGG).

It belongs to the cation transport ATPase (P-type) (TC 3.A.3) family. Type IB subfamily. As to expression, specifically expressed in roots.

Its subcellular location is the vacuole membrane. It catalyses the reaction Zn(2+)(in) + ATP + H2O = Zn(2+)(out) + ADP + phosphate + H(+). The enzyme catalyses Cd(2+)(in) + ATP + H2O = Cd(2+)(out) + ADP + phosphate + H(+). Functionally, root-specific cadmium (Cd) transporter that mediates Cd efflux in root vacuoles. Involved in Cd detoxification by sequestrating Cd into root vacuoles and limiting translocation of Cd from the roots to the shoots, and accumulation in grains. This is Cadmium/zinc-transporting ATPase HMA3 from Oryza sativa subsp. japonica (Rice).